We begin with the raw amino-acid sequence, 422 residues long: UDP-N-acetylglucosamine 1-carboxyvinyltransferase (422 aa).

Lys22–Asn23 is a binding site for phosphoenolpyruvate. Arg95 is a binding site for UDP-N-acetyl-alpha-D-glucosamine. Cys119 acts as the Proton donor in catalysis. Cys119 bears the 2-(S-cysteinyl)pyruvic acid O-phosphothioketal mark. UDP-N-acetyl-alpha-D-glucosamine contacts are provided by residues Arg124 to Gln128, Asp309, and Val331.

The protein belongs to the EPSP synthase family. MurA subfamily.

The protein resides in the cytoplasm. The enzyme catalyses phosphoenolpyruvate + UDP-N-acetyl-alpha-D-glucosamine = UDP-N-acetyl-3-O-(1-carboxyvinyl)-alpha-D-glucosamine + phosphate. Its pathway is cell wall biogenesis; peptidoglycan biosynthesis. Cell wall formation. Adds enolpyruvyl to UDP-N-acetylglucosamine. The protein is UDP-N-acetylglucosamine 1-carboxyvinyltransferase of Anaeromyxobacter sp. (strain K).